The primary structure comprises 262 residues: Glycoprotein gp2 (262 aa).

Residues 1 to 45 (RRGSPQGGSHTTPHPDRLTPSPDDTYDDDTNHPNGRNNSIEIVPQ) form a disordered region.

It is found in the virion membrane. Its function is as follows. Virulence factor. The polypeptide is Glycoprotein gp2 (Equus caballus (Horse)).